A 270-amino-acid polypeptide reads, in one-letter code: uncharacterized protein (270 aa).

Disordered regions lie at residues 35–67 (IKQDNNNNNNNNTNVSLSPSIKSQATSSTGGNK) and 168–204 (SNNNNNNNNNNNNNNNNNNNNNNNNDDDQQKDIDNSN). Residues 39–48 (NNNNNNNNTN) are compositionally biased toward low complexity. A compositionally biased stretch (polar residues) spans 49 to 67 (VSLSPSIKSQATSSTGGNK). Residues 168-191 (SNNNNNNNNNNNNNNNNNNNNNNN) show a composition bias toward low complexity.

This is an uncharacterized protein from Dictyostelium discoideum (Social amoeba).